The following is a 932-amino-acid chain: Protocadherin gamma-A3 (932 aa).

Residues 1 to 29 (MTNCLSFRNGRGLALLCALLGTLCETGSG) form the signal peptide. Cadherin domains follow at residues 30–133 (QIRY…APNF), 134–242 (PTEE…PPMF), 243–347 (TQPE…APEI), 348–452 (TITS…PPTF), 453–562 (PHLS…APEI), and 570–682 (DGST…EPSA). Topologically, residues 30–692 (QIRYSVSEEL…KPNDSDLTLY (663 aa)) are extracellular. Residues Asn265, Asn419, and Asn545 are each glycosylated (N-linked (GlcNAc...) asparagine). N-linked (GlcNAc...) asparagine glycosylation occurs at Asn685. The chain crosses the membrane as a helical span at residues 693–713 (LVVAVAAVSCVFLALVIVLLA). The Cytoplasmic portion of the chain corresponds to 714 to 932 (HRLRRWHKSR…KKKSGKKEKK (219 aa)). Disordered regions lie at residues 806 to 841 (LLQQAPPNTDWRFSQAQRPGTSGSQNGDDTGTWPNN) and 902 to 932 (ATLTNAAGKRDGKAPAGGNGNKKKSGKKEKK). Residues 922-932 (NKKKSGKKEKK) show a composition bias toward basic residues.

The protein resides in the cell membrane. Potential calcium-dependent cell-adhesion protein. May be involved in the establishment and maintenance of specific neuronal connections in the brain. The chain is Protocadherin gamma-A3 (PCDHGA3) from Pan troglodytes (Chimpanzee).